The sequence spans 351 residues: Apolipoprotein L4 (351 aa).

A signal peptide spans methionine 1–proline 21.

It belongs to the apolipoprotein L family. As to expression, widely expressed; the highest levels are in spinal cord, placenta, adrenal gland; also detected in spleen, bone marrow, uterus, trachea, mammary gland and testis; levels are low in brain, heart and pancreas.

It localises to the secreted. Its function is as follows. May play a role in lipid exchange and transport throughout the body. May participate in reverse cholesterol transport from peripheral cells to the liver. In Homo sapiens (Human), this protein is Apolipoprotein L4 (APOL4).